We begin with the raw amino-acid sequence, 514 residues long: RNA polymerase sigma factor SigA (514 aa).

The segment covering 135–159 has biased composition (basic residues); that stretch reads AAKKATAKKAAAKKTTAKKTAAKKS. The tract at residues 135 to 205 is disordered; the sequence is AAKKATAKKA…SDDDEDDAPA (71 aa). The tract at residues 281 to 351 is sigma-70 factor domain-2; it reads LLEANLRLVV…TRAMADQART (71 aa). Positions 305 to 308 match the Interaction with polymerase core subunit RpoC motif; it reads DLIQ. The segment at 360–436 is sigma-70 factor domain-3; it reads EVINKLARVQ…DSEAVVPADA (77 aa). The sigma-70 factor domain-4 stretch occupies residues 449-502; it reads VLDTLSEREAGVVSMRFGLTDGQPKTLDEIGKVYGVTRERIRQIESKTMSKLRH. The segment at residues 475–494 is a DNA-binding region (H-T-H motif); the sequence is LDEIGKVYGVTRERIRQIES.

Belongs to the sigma-70 factor family. RpoD/SigA subfamily. In terms of assembly, interacts transiently with the RNA polymerase catalytic core.

The protein localises to the cytoplasm. In terms of biological role, sigma factors are initiation factors that promote the attachment of RNA polymerase to specific initiation sites and are then released. This sigma factor is the primary sigma factor during exponential growth. The polypeptide is RNA polymerase sigma factor SigA (Streptomyces griseus).